Here is a 38-residue protein sequence, read N- to C-terminus: Large ribosomal subunit protein bL36 (38 aa).

Belongs to the bacterial ribosomal protein bL36 family.

This Roseiflexus sp. (strain RS-1) protein is Large ribosomal subunit protein bL36.